Reading from the N-terminus, the 405-residue chain is Arginine biosynthesis bifunctional protein ArgJ, mitochondrial (405 aa).

Residues threonine 174, lysine 200, threonine 211, and glutamate 300 each coordinate substrate. Threonine 211 serves as the catalytic Nucleophile.

Belongs to the ArgJ family. As to quaternary structure, heterodimer of an alpha and a beta chain. Post-translationally, the alpha and beta chains are autoproteolytically processed from a single precursor protein within the mitochondrion.

The protein localises to the mitochondrion matrix. It carries out the reaction N(2)-acetyl-L-ornithine + L-glutamate = N-acetyl-L-glutamate + L-ornithine. It catalyses the reaction L-glutamate + acetyl-CoA = N-acetyl-L-glutamate + CoA + H(+). It functions in the pathway amino-acid biosynthesis; L-arginine biosynthesis; L-ornithine and N-acetyl-L-glutamate from L-glutamate and N(2)-acetyl-L-ornithine (cyclic): step 1/1. It participates in amino-acid biosynthesis; L-arginine biosynthesis; N(2)-acetyl-L-ornithine from L-glutamate: step 1/4. Its function is as follows. Catalyzes two activities which are involved in the cyclic version of arginine biosynthesis: the synthesis of acetylglutamate from glutamate and acetyl-CoA, and of ornithine by transacetylation between acetylornithine and glutamate. This chain is Arginine biosynthesis bifunctional protein ArgJ, mitochondrial, found in Candida tropicalis (strain ATCC MYA-3404 / T1) (Yeast).